Reading from the N-terminus, the 160-residue chain is Phosphopantetheine adenylyltransferase (160 aa).

Ser8 is a binding site for substrate. Residues 8–9 (SF) and His16 each bind ATP. 3 residues coordinate substrate: Lys40, Thr72, and Arg86. Residues 87–89 (GLR), Glu97, and 122–128 (YSFLSSS) each bind ATP.

It belongs to the bacterial CoaD family. Homohexamer. It depends on Mg(2+) as a cofactor.

It is found in the cytoplasm. The enzyme catalyses (R)-4'-phosphopantetheine + ATP + H(+) = 3'-dephospho-CoA + diphosphate. It functions in the pathway cofactor biosynthesis; coenzyme A biosynthesis; CoA from (R)-pantothenate: step 4/5. Functionally, reversibly transfers an adenylyl group from ATP to 4'-phosphopantetheine, yielding dephospho-CoA (dPCoA) and pyrophosphate. This chain is Phosphopantetheine adenylyltransferase, found in Synechococcus sp. (strain CC9311).